The primary structure comprises 266 residues: Apoptosis regulator ced-9 (266 aa).

Residues 1–58 form a disordered region; it reads MVDSMDMANSSQNTFRRRTMATSEMREFLSTKDAEPNNFGMQTIPESPTPSTPTRRMS. Over residues 24–35 the composition is skewed to basic and acidic residues; that stretch reads EMREFLSTKDAE. A BH4 motif is present at residues 75-94; sequence IQGFVVDYFTYRIAQNGLDW. A BH1 motif is present at residues 156 to 174; it reads NTPCPMSYGRLIGLISFGG. Residues 208-223 carry the BH2 motif; that stretch reads SWKEHNRSWADFMKLG.

Belongs to the Bcl-2 family. In terms of assembly, interacts with asymmetric homodimer ced-4; the interaction sequesters ced-4. Interacts with egl-1; the interaction results in ced-4 release. Interacts with dre-1; the interaction inhibits ced-9 activity, either directly or indirectly. Interacts with dct-1. May form a complex composed of ced-9, ced-4 and mac-1.

The protein localises to the perikaryon. It is found in the synapse. Its subcellular location is the endomembrane system. The protein resides in the mitochondrion membrane. Plays a major role in programmed cell death (PCD, apoptosis). egl-1 binds to and directly inhibits the activity of ced-9, releasing the cell death activator ced-4 from a ced-9/ced-4 containing protein complex and allowing ced-4 to activate the cell-killing caspase ced-3. During larval development, required for the elimination of transient presynaptic components downstream of egl-1 and upstream of ced-4 and ced-3 apoptotic pathway. This chain is Apoptosis regulator ced-9 (ced-9), found in Caenorhabditis briggsae.